A 262-amino-acid chain; its full sequence is Phosphonates import ATP-binding protein PhnC (262 aa).

An ABC transporter domain is found at 5-253 (IRVEKLAKTF…RFDHLYRSIN (249 aa)). 37–44 (GPSGSGKS) serves as a coordination point for ATP.

Belongs to the ABC transporter superfamily. Phosphonates importer (TC 3.A.1.9.1) family. As to quaternary structure, the complex is composed of two ATP-binding proteins (PhnC), two transmembrane proteins (PhnE) and a solute-binding protein (PhnD).

The protein resides in the cell inner membrane. The catalysed reaction is phosphonate(out) + ATP + H2O = phosphonate(in) + ADP + phosphate + H(+). Functionally, part of the ABC transporter complex PhnCDE involved in phosphonates import. Responsible for energy coupling to the transport system. This chain is Phosphonates import ATP-binding protein PhnC, found in Shigella sonnei (strain Ss046).